The chain runs to 354 residues: Methylthioribose-1-phosphate isomerase (354 aa).

Substrate-binding positions include 58-60, Arg-101, and Gln-204; that span reads RGA. Asp-245 serves as the catalytic Proton donor. Substrate is bound at residue 255 to 256; it reads NK.

This sequence belongs to the eIF-2B alpha/beta/delta subunits family. MtnA subfamily.

The catalysed reaction is 5-(methylsulfanyl)-alpha-D-ribose 1-phosphate = 5-(methylsulfanyl)-D-ribulose 1-phosphate. The protein operates within amino-acid biosynthesis; L-methionine biosynthesis via salvage pathway; L-methionine from S-methyl-5-thio-alpha-D-ribose 1-phosphate: step 1/6. Catalyzes the interconversion of methylthioribose-1-phosphate (MTR-1-P) into methylthioribulose-1-phosphate (MTRu-1-P). This is Methylthioribose-1-phosphate isomerase from Xylella fastidiosa (strain 9a5c).